Reading from the N-terminus, the 1281-residue chain is MSQHLPLVAAQPGIWMAEKLSDLPSAWSVAHYVELTGEVDAPLLARAVVAGLAQADTLRMRFTEDNGEVWQWVDDALIFELPEIIDLRTNIDPHGTAQALMLADLQQDLRVDSGKPLVFHQLIQVADNRWYWYQRYHHLLVDGFSFPAITRQIANIYCALLRGEPTPASPFTPFADVVEEYQQYRESEAWQRDAAFWVEQRRQLPPPASLSPAPLAGRSASADILRLKMEFTDGEFRQLATQLSGVQRTDLALALTALWLGRLCNRMDYAAGFIFMRRLGSAALTATGPVLNVLPLGIHIAAQETLPELATRLATRLAAQLKKMRRHQRYDAEQIVRDSGRAAGDEPLFGPVLNIKVFDYQLDIPGVQAQTHTLATGPVNDLELALFPDEHGDLSIEILANKQRYDEPTLIQHAERLKMLIAQFAADPALLCGDVDIMLPGEYAQLAQINATQVEIPETTLSALVAEQAAKTPDAPALADARYLFSYREMHEQVVALANLLRERGVKPGDSVAVALPRSVFLTLALHAIVEAGAAWLPLDTGYPDDRLKMMLEDARPSLLITTDDQLPRFSDVPNLTNLCYNAPLTPQGSAPLQLSQPHHTAYIIFTSGSTGRPKGVMVGQTAIVNRLLWMQNHYPLTGEDVVAQKTPCSFDVSVWEFFWPFIAGAKLVMAEPEAHRDPLAMQQFFAEYGVTTTHFVPSMLAAFVASLTPQTARQSCVTLKQVFCSGEALPADLCREWQQLTGAPLHNLYGPTEAAVDVSWYPAFGEELAQVRGSSVPIGYPVWNTGLRILDAMMHPVPPGVAGDLYLTGIQLAQGYLGRPDLTASRFIADPFAPGERMYRTGDVARWLDNGAVEYLGRSDDQLKIRGQRIELGEIDRVMQALPDVKQAVTHACVINQAAATGGDARQLVGYLVSQSGLPLDTSALQAQLRETLPPHMVPVVLLQLPQLPLSANGKLDRKALPLPELKAQAPGRAPKAGSETIIAAAFASLLGCDVQDADADFFALGGHSLLAMKLAAQLSRQFARQVTPGQVMVASTVAKLATIIDGEEDSSRRMGFETILPLREGNGPTLFCFHPASGFAWQFSVLSRYLDPQWSIIGIQSPRPHGPMQTATNLDEVCEAHLATLLEQQPHGIAARLRARGEQVAFLGLLDTWPPETQNWQEKEANGLDPEVLAEINREREAFLAAQQGSTSTELFTTIEGNYADAVRLLTTAHSVPFDGKATLFVAERTLQEGMSPERAWSPWIAELDIYRQDCAHVDIISPGAFVKIGPIIRATLNR.

The interval 1 to 301 (MSQHLPLVAA…NVLPLGIHIA (301 aa)) is elongation/condensation. Residues 486 to 891 (SYREMHEQVV…ALPDVKQAVT (406 aa)) are adenylation. The 76-residue stretch at 975 to 1050 (APKAGSETII…KLATIIDGEE (76 aa)) folds into the Carrier domain. Ser1010 is subject to O-(pantetheine 4'-phosphoryl)serine. The interval 1070-1281 (PTLFCFHPAS…GPIIRATLNR (212 aa)) is thioesterase. Catalysis depends on His1259, which acts as the Proton acceptor; for thioesterase activity.

This sequence belongs to the ATP-dependent AMP-binding enzyme family. EntF subfamily. As to quaternary structure, proteins EntB, EntD, EntE and EntF are the component of the enterobactin synthase. Components probably do not form a stable complex. EntF acts as a catalytic monomer. Requires pantetheine 4'-phosphate as cofactor. Post-translationally, 4'-phosphopantetheine is transferred from CoA to a specific serine of apo-EntF by EntD. Holo-EntF so formed is then acylated with seryl-AMP.

Its subcellular location is the cytoplasm. It carries out the reaction 3 2,3-dihydroxybenzoate + 3 L-serine + 6 ATP = enterobactin + 6 AMP + 6 diphosphate + 4 H(+). It catalyses the reaction holo-[peptidyl-carrier protein] + L-serine + ATP = L-seryl-[peptidyl-carrier protein] + AMP + diphosphate. The protein operates within siderophore biosynthesis; enterobactin biosynthesis. Functionally, involved in the biosynthesis of the siderophore enterobactin (enterochelin), which is a macrocyclic trimeric lactone of N-(2,3-dihydroxybenzoyl)-serine. EntF catalyzes the activation of L-serine via ATP-dependent PPi exchange reaction to form seryladenylate. Activated L-serine is loaded onto the peptidyl carrier domain via a thioester linkage to the phosphopanthetheine moiety, forming seryl-S-Ppant-EntF. EntF acts then as the sole catalyst for the formation of the three amide and three ester linkages found in enterobactin, using seryladenylate and 2,3-dihydroxybenzoate-S-Ppant-EntB (DHB-S-Ppant-EntB) as substrates, via the formation of a DHB-Ser-S-Ppant-EntF intermediate. In Shigella flexneri, this protein is Enterobactin synthase component F (entF).